Consider the following 372-residue polypeptide: Cell division protein FtsZ 1 (372 aa).

GTP contacts are provided by residues G51 to N55, G138 to G140, E169, R173, and D216. The segment at E352–L372 is disordered.

The protein belongs to the FtsZ family. As to quaternary structure, homodimer. Polymerizes to form a dynamic ring structure in a strictly GTP-dependent manner. Interacts directly with several other division proteins.

The protein resides in the cytoplasm. Its function is as follows. Essential cell division protein that forms a contractile ring structure (Z ring) at the future cell division site. The regulation of the ring assembly controls the timing and the location of cell division. One of the functions of the FtsZ ring is to recruit other cell division proteins to the septum to produce a new cell wall between the dividing cells. Binds GTP and shows GTPase activity. The polypeptide is Cell division protein FtsZ 1 (Pyrococcus horikoshii (strain ATCC 700860 / DSM 12428 / JCM 9974 / NBRC 100139 / OT-3)).